Consider the following 661-residue polypeptide: Serine/threonine-protein phosphatase rdgC (661 aa).

Positions 7-32 constitute an IQ domain; it reads RAAIFIQKWYRRHQARREMQRRCNWQ. Positions 105–413 are catalytic; the sequence is IDLLIDVFRK…HFVQYISAAS (309 aa). Residues D158, H160, D187, and N219 each coordinate Mn(2+). H220 serves as the catalytic Proton donor. The Mn(2+) site is built by H271 and H360. EF-hand domains are found at residues 441-476, 526-561, and 566-601; these read DHRDELEDEFRKYDPKDSGYISISHWCKVMENVTKL, ANKASLVAIFNIIDADNSGEITLDEFETAIDLLVAH, and YSKAEMLEKCRMMDLNGDGKVDLNEFLEAFRLSDLH. Ca(2+) contacts are provided by D539, D541, S543, E545, E550, D579, N581, D583, K585, and E590. Residues 606-625 are disordered; sequence QDENIRRRSTGRPSVAKTAT.

Belongs to the PPP phosphatase family. Mn(2+) serves as cofactor. In terms of tissue distribution, expressed in the visual system of the fly, as well as in the mushroom bodies of the central brain.

It catalyses the reaction O-phospho-L-seryl-[protein] + H2O = L-seryl-[protein] + phosphate. The enzyme catalyses O-phospho-L-threonyl-[protein] + H2O = L-threonyl-[protein] + phosphate. In terms of biological role, phosphatase required to prevent light-induced retinal degeneration. The sequence is that of Serine/threonine-protein phosphatase rdgC (rdgC) from Drosophila melanogaster (Fruit fly).